Consider the following 492-residue polypeptide: Dipeptide permease D (492 aa).

13 helical membrane-spanning segments follow: residues 14-34 (VVAL…LLIL), 49-69 (ALFS…GYLA), 91-111 (LVLG…AIIV), 138-158 (GGFS…PIAC), 167-187 (WAMG…IFLC), 212-232 (NWGW…VLFW), 236-256 (SVYA…RIYL), 269-289 (LIVV…QGGS), 312-332 (MFQS…AWLV), 344-364 (IWGK…ILTL), 379-399 (LMVL…PVAM), 413-433 (VLTG…AGVI), and 458-478 (VFSQ…VIWL).

It belongs to the major facilitator superfamily. Proton-dependent oligopeptide transporter (POT/PTR) (TC 2.A.17) family. DtpD subfamily.

Its subcellular location is the cell inner membrane. Functionally, probable proton-dependent permease that transports dipeptides. This Klebsiella pneumoniae (strain 342) protein is Dipeptide permease D.